An 871-amino-acid chain; its full sequence is Protein arg-6, mitochondrial (871 aa).

Residues 1–44 (MYSACAVALRAGARRVVRRVPKSARALPRAAAARRQISTTAARS) constitute a mitochondrion transit peptide. Positions 336 to 488 (QASTSLSEFK…DFTENGRAML (153 aa)) constitute an N-acetyltransferase domain. Residue Cys-689 is part of the active site.

The protein in the N-terminal section; belongs to the acetylglutamate kinase family. This sequence in the C-terminal section; belongs to the NAGSA dehydrogenase family. Post-translationally, the protein precursor is cleaved into the two biologically active enzymes, the kinase and the reductase.

The protein resides in the mitochondrion. It carries out the reaction N-acetyl-L-glutamate 5-semialdehyde + phosphate + NADP(+) = N-acetyl-L-glutamyl 5-phosphate + NADPH + H(+). The enzyme catalyses N-acetyl-L-glutamate + ATP = N-acetyl-L-glutamyl 5-phosphate + ADP. It functions in the pathway amino-acid biosynthesis; L-arginine biosynthesis; N(2)-acetyl-L-ornithine from L-glutamate: step 2/4. Its pathway is amino-acid biosynthesis; L-arginine biosynthesis; N(2)-acetyl-L-ornithine from L-glutamate: step 3/4. This chain is Protein arg-6, mitochondrial (arg-6), found in Neurospora crassa (strain ATCC 24698 / 74-OR23-1A / CBS 708.71 / DSM 1257 / FGSC 987).